The chain runs to 388 residues: Regulator of G-protein signaling 20 (388 aa).

The interval Pro-138 to Gly-199 is disordered. Positions Pro-185–Gln-197 are enriched in low complexity. An RGS domain is found at Ser-262–Leu-378.

As to quaternary structure, forms a complex with G(alpha)z/i2 subunits and mu-opioid receptors; the formation of this complex results in mu-opioid receptor desensitization. Interacts with OPRM1. Fatty acylated. Heavily palmitoylated in the cysteine string motif. Post-translationally, N- and O-glycosylated in synapsomal membranes. In terms of processing, serine phosphorylated in synapsomal membranes. Sumoylated with SUMO1 and SUMO2 in synaptosomes. The sumoylated forms act as a scaffold for sequestering mu-opioid receptor-activated G(alpha) subunits. In terms of tissue distribution, isoform 5 is expressed in brain at high levels in the caudate nucleus and temporal lobe.

It is found in the membrane. The protein resides in the nucleus. Its subcellular location is the cytoplasm. Inhibits signal transduction by increasing the GTPase activity of G protein alpha subunits thereby driving them into their inactive GDP-bound form. Binds selectively to G(z)-alpha and G(alpha)-i2 subunits, accelerates their GTPase activity and regulates their signaling activities. The G(z)-alpha activity is inhibited by the phosphorylation and palmitoylation of the G-protein. Negatively regulates mu-opioid receptor-mediated activation of the G-proteins. The sequence is that of Regulator of G-protein signaling 20 (RGS20) from Homo sapiens (Human).